Reading from the N-terminus, the 222-residue chain is Phosphoribosylformylglycinamidine synthase subunit PurQ (222 aa).

A Glutamine amidotransferase type-1 domain is found at 2–222 (SVAIVRFPGT…DNLLHIAEMK (221 aa)). The active-site Nucleophile is the Cys-86. Active-site residues include His-194 and Glu-196.

In terms of assembly, part of the FGAM synthase complex composed of 1 PurL, 1 PurQ and 2 PurS subunits.

The protein resides in the cytoplasm. The enzyme catalyses N(2)-formyl-N(1)-(5-phospho-beta-D-ribosyl)glycinamide + L-glutamine + ATP + H2O = 2-formamido-N(1)-(5-O-phospho-beta-D-ribosyl)acetamidine + L-glutamate + ADP + phosphate + H(+). The catalysed reaction is L-glutamine + H2O = L-glutamate + NH4(+). The protein operates within purine metabolism; IMP biosynthesis via de novo pathway; 5-amino-1-(5-phospho-D-ribosyl)imidazole from N(2)-formyl-N(1)-(5-phospho-D-ribosyl)glycinamide: step 1/2. Its function is as follows. Part of the phosphoribosylformylglycinamidine synthase complex involved in the purines biosynthetic pathway. Catalyzes the ATP-dependent conversion of formylglycinamide ribonucleotide (FGAR) and glutamine to yield formylglycinamidine ribonucleotide (FGAM) and glutamate. The FGAM synthase complex is composed of three subunits. PurQ produces an ammonia molecule by converting glutamine to glutamate. PurL transfers the ammonia molecule to FGAR to form FGAM in an ATP-dependent manner. PurS interacts with PurQ and PurL and is thought to assist in the transfer of the ammonia molecule from PurQ to PurL. This chain is Phosphoribosylformylglycinamidine synthase subunit PurQ, found in Helicobacter hepaticus (strain ATCC 51449 / 3B1).